Consider the following 744-residue polypeptide: NAD(P)H-quinone oxidoreductase subunit 5, chloroplastic (744 aa).

16 consecutive transmembrane segments (helical) span residues 9–29 (WIIPFLPLPVPMLIGLGLFLF), 40–60 (WAFQSVLLLSIVMIFSMNLSI), 89–109 (IDPLTSIMSILITTVGILVLI), 125–145 (FVYMSFFSTSMLGLVTSSNLI), 147–167 (IYIFWELVGICSYLLIGFWFT), 185–205 (GDFGLLLGILGFYWITGSFEF), 219–239 (NEVNFLFVTLCAVLLFAGAIA), 258–278 (TPISALIHAATMVAAGIFLVA), 290–312 (IMNFISLIGIITVFLGATLALAQ), 327–347 (LGYMMLALGMGSYRSALFHLI), 354–374 (ALLFLGSGSVIHSMETLVGYC), 396–416 (TSFLLGTLSLCGIPPLACFWS), 425–445 (WLYSPIFAIIAWSTAGLTAFY), 549–569 (LFPILILVLFTLFVGFLGIPF), 608–628 (VFSVSISSFGIFIAFFLYKPV), and 724–744 (YLFFYFSYVSIFLLIYYFLNF).

It belongs to the complex I subunit 5 family. In terms of assembly, NDH is composed of at least 16 different subunits, 5 of which are encoded in the nucleus.

Its subcellular location is the plastid. It localises to the chloroplast thylakoid membrane. It catalyses the reaction a plastoquinone + NADH + (n+1) H(+)(in) = a plastoquinol + NAD(+) + n H(+)(out). It carries out the reaction a plastoquinone + NADPH + (n+1) H(+)(in) = a plastoquinol + NADP(+) + n H(+)(out). Its function is as follows. NDH shuttles electrons from NAD(P)H:plastoquinone, via FMN and iron-sulfur (Fe-S) centers, to quinones in the photosynthetic chain and possibly in a chloroplast respiratory chain. The immediate electron acceptor for the enzyme in this species is believed to be plastoquinone. Couples the redox reaction to proton translocation, and thus conserves the redox energy in a proton gradient. The chain is NAD(P)H-quinone oxidoreductase subunit 5, chloroplastic (ndhF) from Mutisia acuminata.